Here is a 662-residue protein sequence, read N- to C-terminus: Sodium/glucose cotransporter 1 (662 aa).

The Extracellular portion of the chain corresponds to 1–24 (MDSSTWSPATTATTEPLKPHERIR). The helical transmembrane segment at 25-47 (NAADISVIVIYFVVVMAVGLWAM) threads the bilayer. At 48-66 (CSTNRGTVGGFFLAGRSMV) the chain is on the cytoplasmic side. Residues 67 to 90 (WWPVGASLFASNIGSGHFVGLAGT) form a helical membrane-spanning segment. The Extracellular segment spans residues 91–95 (GAAAG). A helical transmembrane segment spans residues 96-117 (IATGGFEWNALIWVVVLGWLFV). Residues 118–139 (PIYIKAGVVTMPEYLRKRFGGK) lie on the Cytoplasmic side of the membrane. Residues 140 to 169 (RIQVYLSILSLMLYIFTKISADIFSGAIFI) form a helical membrane-spanning segment. Over 170–176 (TLALGLD) the chain is Extracellular. A helical transmembrane segment spans residues 177–193 (LYLAIFLLLAITGLYTI). The Cytoplasmic segment spans residues 194–202 (TGGLAAVIY). Residues 203 to 221 (TDTLQTAIMLVGSFILTGF) traverse the membrane as a helical segment. At 222–275 (AFHEVGGYDAFMEKYMNAIPTVISDGNITIKKECYTPRADSFHIFRDPLKGDLP) the chain is on the extracellular side. The N-linked (GlcNAc...) asparagine glycan is linked to N248. 5 disulfide bridges follow: C255–C511, C255–C608, C345–C351, C355–C361, and C517–C522. A helical membrane pass occupies residues 276–295 (WPGLTFGLSILALWYWCTDQ). Over 296–309 (VIVQRCLSAKNMSH) the chain is Cytoplasmic. The chain crosses the membrane as a helical span at residues 310–331 (VKAGCVMCGYFKLLPMFVIVMP). Residues 332–375 (GMISRVLYTEKIACTVPSECEKYCGTKVGCSNIAYPTLVVELMP) are Extracellular-facing. The helical transmembrane segment at 376–406 (NGLRGLMLSVMLASLMSSLTSIFNSASTLFT) threads the bilayer. Over 407 to 422 (MDVYTKIRKRASEKEL) the chain is Cytoplasmic. A helical membrane pass occupies residues 423–444 (MIAGRLFILVLIGISIAWVPIV). Residues 445–451 (QSAQSGQ) lie on the Extracellular side of the membrane. Residues 452–477 (LFDYIQSVTSYLGPPIAAVFLLAIFC) traverse the membrane as a helical segment. Over 478–481 (KRVN) the chain is Cytoplasmic. Residues 482 to 504 (EEGAFWGLVIGCMIGLARMITEF) form a helical membrane-spanning segment. At 505–525 (AYGTGSCVEPSNCPTIICGVH) the chain is on the extracellular side. Residues 526–547 (YLYFAIILFVISIIIVLVVSLF) traverse the membrane as a helical segment. The Cytoplasmic portion of the chain corresponds to 548 to 642 (TKPIPDVHLY…TSEKPLWRTV (95 aa)). T587 is subject to Phosphothreonine. The chain crosses the membrane as a helical span at residues 643-660 (VNINGIILLTVAVFCHAY). The Extracellular portion of the chain corresponds to 661–662 (FA).

The protein belongs to the sodium:solute symporter (SSF) (TC 2.A.21) family. In terms of processing, N-glycosylation is not necessary for the cotransporter function.

Its subcellular location is the apical cell membrane. It catalyses the reaction D-glucose(out) + 2 Na(+)(out) = D-glucose(in) + 2 Na(+)(in). The catalysed reaction is D-galactose(out) + 2 Na(+)(out) = D-galactose(in) + 2 Na(+)(in). Its activity is regulated as follows. Enhanced by the interaction with PDZK1IP1/MAP17; but unlike SLC5A2/SGLT2, PDZK1IP1 is not essential for SLC5A1 transporter activity. Possibly modulated by cholesterol binding. In terms of biological role, electrogenic Na(+)-coupled sugar symporter that actively transports D-glucose or D-galactose at the plasma membrane, with a Na(+) to sugar coupling ratio of 2:1. Transporter activity is driven by a transmembrane Na(+) electrochemical gradient set by the Na(+)/K(+) pump. Has a primary role in the transport of dietary monosaccharides from enterocytes to blood. Responsible for the absorption of D-glucose or D-galactose across the apical brush-border membrane of enterocytes, whereas basolateral exit is provided by GLUT2. Additionally, functions as a D-glucose sensor in enteroendocrine cells, triggering the secretion of the incretins GCG and GIP that control food intake and energy homeostasis. Together with SGLT2, functions in reabsorption of D-glucose from glomerular filtrate, playing a nonredundant role in the S3 segment of the proximal tubules. Transports D-glucose into endometrial epithelial cells, controlling glycogen synthesis and nutritional support for the embryo as well as the decidual transformation of endometrium prior to conception. Acts as a water channel enabling passive water transport in response to the osmotic gradient created upon sugar and Na(+) uptake. Has high water conductivity comparable to aquaporins and therefore is expected to play an important role in transepithelial water permeability, especially in the small intestine. The polypeptide is Sodium/glucose cotransporter 1 (SLC5A1) (Sus scrofa (Pig)).